The following is a 387-amino-acid chain: Protein mab-21-like 3 (387 aa).

Belongs to the mab-21 family.

This chain is Protein mab-21-like 3 (mab21L3), found in Danio rerio (Zebrafish).